Here is a 428-residue protein sequence, read N- to C-terminus: GTPase Obg (428 aa).

The region spanning 1 to 158 (MFVDQVKIYV…RDVILELKVL (158 aa)) is the Obg domain. One can recognise an OBG-type G domain in the interval 159–329 (ADVGLVGFPS…LLFEVANLIE (171 aa)). Residues 165 to 172 (GFPSVGKS), 190 to 194 (FTTIV), 212 to 215 (DLPG), 282 to 285 (NKMD), and 310 to 312 (SAV) each bind GTP. Positions 172 and 192 each coordinate Mg(2+). In terms of domain architecture, OCT spans 350–428 (KFETEGVKFD…ILEYEFEFID (79 aa)).

It belongs to the TRAFAC class OBG-HflX-like GTPase superfamily. OBG GTPase family. Monomer. It depends on Mg(2+) as a cofactor.

The protein localises to the cytoplasm. Functionally, an essential GTPase which binds GTP, GDP and possibly (p)ppGpp with moderate affinity, with high nucleotide exchange rates and a fairly low GTP hydrolysis rate. Plays a role in control of the cell cycle, stress response, ribosome biogenesis and in those bacteria that undergo differentiation, in morphogenesis control. The polypeptide is GTPase Obg (Bacillus cereus (strain AH820)).